Reading from the N-terminus, the 72-residue chain is Protein kish-A (72 aa).

The first 26 residues, M1–S26, serve as a signal peptide directing secretion. Over L27–K53 the chain is Extracellular. N35 is a glycosylation site (N-linked (GlcNAc...) asparagine). Residues S54–M71 traverse the membrane as a helical segment. Residue Q72 is a topological domain, cytoplasmic.

This sequence belongs to the KISH family.

The protein localises to the golgi apparatus membrane. Its function is as follows. Involved in the early part of the secretory pathway. The polypeptide is Protein kish-A (TMEM167A) (Taeniopygia guttata (Zebra finch)).